The chain runs to 92 residues: UPF0235 protein CCA_00247 (92 aa).

It belongs to the UPF0235 family.

The chain is UPF0235 protein CCA_00247 from Chlamydia caviae (strain ATCC VR-813 / DSM 19441 / 03DC25 / GPIC) (Chlamydophila caviae).